The primary structure comprises 61 residues: uncharacterized protein (61 aa).

This is an uncharacterized protein from Autographa californica nuclear polyhedrosis virus (AcMNPV).